A 463-amino-acid chain; its full sequence is Probable glycosyltransferase 3 (463 aa).

The Cytoplasmic portion of the chain corresponds to 1–24 (MAVTGGGRPAVRQQAARGKQMQRT). Residues 25-47 (FNNVKITLICGFITLLVLRGTVG) form a helical; Signal-anchor for type II membrane protein membrane-spanning segment. Topologically, residues 48–463 (INLLTYGVGG…ALKMDAKIES (416 aa)) are lumenal. The tract at residues 82 to 125 (EIRSDTDDDDDDEEEEPLGVDASTTTTTNSTTTTATAARRRSSN) is disordered. Residues 87–99 (TDDDDDDEEEEPL) show a composition bias toward acidic residues. Over residues 103 to 118 (ASTTTTTNSTTTTATA) the composition is skewed to low complexity. 3 N-linked (GlcNAc...) asparagine glycosylation sites follow: asparagine 110, asparagine 125, and asparagine 442.

This sequence belongs to the glycosyltransferase 34 family.

Its subcellular location is the golgi apparatus membrane. Probable glycosyltransferase that may be involved in the biosynthesis of xyloglucan. This chain is Probable glycosyltransferase 3, found in Oryza sativa subsp. japonica (Rice).